A 323-amino-acid polypeptide reads, in one-letter code: Pyruvate dehydrogenase E1 component subunit beta (323 aa).

A thiamine diphosphate-binding site is contributed by E60. K(+)-binding residues include I113, A161, I162, D164, and N166.

In terms of assembly, heterodimer of an alpha and a beta chain. Requires thiamine diphosphate as cofactor.

Its subcellular location is the plastid. The protein localises to the chloroplast. It catalyses the reaction N(6)-[(R)-lipoyl]-L-lysyl-[protein] + pyruvate + H(+) = N(6)-[(R)-S(8)-acetyldihydrolipoyl]-L-lysyl-[protein] + CO2. In terms of biological role, the pyruvate dehydrogenase complex catalyzes the overall conversion of pyruvate to acetyl-CoA and CO(2). It contains multiple copies of three enzymatic components: pyruvate dehydrogenase (E1), dihydrolipoamide acetyltransferase (E2) and lipoamide dehydrogenase (E3). The sequence is that of Pyruvate dehydrogenase E1 component subunit beta (pdhB) from Gracilaria tenuistipitata var. liui (Red alga).